A 755-amino-acid chain; its full sequence is Histone-lysine N-methyltransferase, H3 lysine-9 specific SUVH8 (755 aa).

Disordered stretches follow at residues tyrosine 62–threonine 98 and tyrosine 111–isoleucine 243. 2 stretches are compositionally biased toward basic and acidic residues: residues valine 73 to histidine 86 and isoleucine 122 to histidine 135. Residues lysine 174–glycine 186 constitute a DNA-binding region (a.T hook). A compositionally biased stretch (basic residues) spans lysine 174 to proline 193. Residues aspartate 197–proline 207 are compositionally biased toward polar residues. The segment covering glycine 212–lysine 231 has biased composition (basic residues). A YDG domain is found at glycine 310 to arginine 448. Residues glutamine 528–glycine 578 form the Pre-SET domain. Positions leucine 581–glycine 723 constitute an SET domain. S-adenosyl-L-methionine contacts are provided by residues cysteine 591–tryptophan 593, aspartate 624, tyrosine 626, arginine 676, and asparagine 679–histidine 680. Positions 682, 743, 745, and 750 each coordinate Zn(2+). The 17-residue stretch at glycine 739–glycine 755 folds into the Post-SET domain.

This sequence belongs to the class V-like SAM-binding methyltransferase superfamily. Histone-lysine methyltransferase family. Suvar3-9 subfamily.

Its subcellular location is the nucleus. The protein localises to the chromosome. It is found in the centromere. The catalysed reaction is N(6)-methyl-L-lysyl(9)-[histone H3] + S-adenosyl-L-methionine = N(6),N(6)-dimethyl-L-lysyl(9)-[histone H3] + S-adenosyl-L-homocysteine + H(+). It catalyses the reaction L-lysyl(9)-[histone H3] + S-adenosyl-L-methionine = N(6)-methyl-L-lysyl(9)-[histone H3] + S-adenosyl-L-homocysteine + H(+). In terms of biological role, histone methyltransferase. Methylates 'Lys-9' of histone H3. H3 'Lys-9' methylation represents a specific tag for epigenetic transcriptional repression. This Arabidopsis thaliana (Mouse-ear cress) protein is Histone-lysine N-methyltransferase, H3 lysine-9 specific SUVH8 (SUVH8).